The chain runs to 254 residues: RING-H2 finger protein ATL28 (254 aa).

Residues 25–45 (VVLTGVLLFVIFAGFFSLFLW) form a helical membrane-spanning segment. The segment at 103–145 (CAICLSEFSDEDTVRLITVCRHPFHSNCIDLWFELHKTCPVCR) adopts an RING-type; atypical zinc-finger fold.

The protein belongs to the RING-type zinc finger family. ATL subfamily.

Its subcellular location is the membrane. The catalysed reaction is S-ubiquitinyl-[E2 ubiquitin-conjugating enzyme]-L-cysteine + [acceptor protein]-L-lysine = [E2 ubiquitin-conjugating enzyme]-L-cysteine + N(6)-ubiquitinyl-[acceptor protein]-L-lysine.. It participates in protein modification; protein ubiquitination. This chain is RING-H2 finger protein ATL28 (ATL28), found in Arabidopsis thaliana (Mouse-ear cress).